The primary structure comprises 208 residues: Potassium-transporting ATPase KdpC subunit (208 aa).

A helical membrane pass occupies residues 6-26 (PALLVSIVLLVVCGLVYPLVL).

This sequence belongs to the KdpC family. As to quaternary structure, the system is composed of three essential subunits: KdpA, KdpB and KdpC.

It is found in the cell membrane. Its function is as follows. Part of the high-affinity ATP-driven potassium transport (or Kdp) system, which catalyzes the hydrolysis of ATP coupled with the electrogenic transport of potassium into the cytoplasm. This subunit acts as a catalytic chaperone that increases the ATP-binding affinity of the ATP-hydrolyzing subunit KdpB by the formation of a transient KdpB/KdpC/ATP ternary complex. The polypeptide is Potassium-transporting ATPase KdpC subunit (Clostridioides difficile (strain 630) (Peptoclostridium difficile)).